The chain runs to 316 residues: Methionyl-tRNA formyltransferase (316 aa).

Position 110-113 (S110–P113) interacts with (6S)-5,6,7,8-tetrahydrofolate.

This sequence belongs to the Fmt family.

It carries out the reaction L-methionyl-tRNA(fMet) + (6R)-10-formyltetrahydrofolate = N-formyl-L-methionyl-tRNA(fMet) + (6S)-5,6,7,8-tetrahydrofolate + H(+). Attaches a formyl group to the free amino group of methionyl-tRNA(fMet). The formyl group appears to play a dual role in the initiator identity of N-formylmethionyl-tRNA by promoting its recognition by IF2 and preventing the misappropriation of this tRNA by the elongation apparatus. The polypeptide is Methionyl-tRNA formyltransferase (Bacillus licheniformis (strain ATCC 14580 / DSM 13 / JCM 2505 / CCUG 7422 / NBRC 12200 / NCIMB 9375 / NCTC 10341 / NRRL NRS-1264 / Gibson 46)).